Reading from the N-terminus, the 524-residue chain is Anthranilate synthase component 1 (524 aa).

The segment covering 1–16 (MQTTANHSSRSTQTGT) has biased composition (polar residues). The disordered stretch occupies residues 1 to 25 (MQTTANHSSRSTQTGTRAHGAALAE). L-tryptophan contacts are provided by residues Ser74 and 298–300 (PYM). Residue 339-340 (GT) coordinates chorismate. Lys355 participates in a covalent cross-link: Isoglutamyl lysine isopeptide (Lys-Gln) (interchain with Q-Cter in protein Pup). Position 366 (Glu366) interacts with Mg(2+). Chorismate-binding positions include Tyr454, Arg474, 488-490 (GGG), and Gly490. Mg(2+) is bound at residue Glu503.

The protein belongs to the anthranilate synthase component I family. Heterotetramer consisting of two non-identical subunits: a beta subunit (TrpG) and a large alpha subunit (TrpE). Mg(2+) serves as cofactor.

It catalyses the reaction chorismate + L-glutamine = anthranilate + pyruvate + L-glutamate + H(+). It functions in the pathway amino-acid biosynthesis; L-tryptophan biosynthesis; L-tryptophan from chorismate: step 1/5. Feedback inhibited by tryptophan. Functionally, part of a heterotetrameric complex that catalyzes the two-step biosynthesis of anthranilate, an intermediate in the biosynthesis of L-tryptophan. In the first step, the glutamine-binding beta subunit (TrpG) of anthranilate synthase (AS) provides the glutamine amidotransferase activity which generates ammonia as a substrate that, along with chorismate, is used in the second step, catalyzed by the large alpha subunit of AS (TrpE) to produce anthranilate. In the absence of TrpG, TrpE can synthesize anthranilate directly from chorismate and high concentrations of ammonia. This Mycolicibacterium smegmatis (strain ATCC 700084 / mc(2)155) (Mycobacterium smegmatis) protein is Anthranilate synthase component 1 (trpE).